The primary structure comprises 1039 residues: RNA-binding protein Unr (1039 aa).

Residues 49-62 (TTLGLQPQGQGPSP) show a composition bias toward polar residues. Disordered stretches follow at residues 49–126 (TTLG…QQQH) and 165–184 (SIFG…PSQT). Low complexity-rich tracts occupy residues 63–80 (QQQQ…QHQQ), 89–126 (QQHM…QQQH), and 165–182 (SIFG…ADPS). Residues 186-250 (RETGIIEKLL…GKPIASQVSK (65 aa)) enclose the CSD 1 domain. The CSD 2; degenerate domain maps to 261-337 (RVTGTVTTEL…GNLGACHIRL (77 aa)). Residues 345 to 413 (KYRGVVCSMK…GREFACNITR (69 aa)) enclose the CSD 3 domain. Residues 428-503 (VYKGQVLKSL…RDQLQRATSI (76 aa)) form the CSD 4; degenerate domain. The CSD 5 domain maps to 517 to 585 (REQGTIASLK…SRLQAIRIKH (69 aa)). Residues 593–673 (FETLVASNIE…KECIAVNVQQ (81 aa)) enclose the CSD 6; degenerate domain. Positions 721–741 (QNGYVMHGSPGGSTSSVGSNN) are disordered. Positions 732–741 (GSTSSVGSNN) are enriched in low complexity. The 69-residue stretch at 763–831 (VYRGFIAVMK…NCLPAENVRM (69 aa)) folds into the CSD 7 domain. Positions 846 to 919 (THNGVVARPL…SGRAACVNAV (74 aa)) constitute a CSD 8; degenerate domain. The CSD 9 domain occupies 922 to 987 (KKRATVDSIK…GKSSACNVLK (66 aa)).

Belongs to the UNR family. Interacts with Sxl; cooperates with Sxl to prevent translation of msl-2 transcripts. Interacts with mle; promoting association between mle and roX2 non-coding RNA. Interacts (via CSD domain 7-9) with pAbp; promoting translation inhibition of msl-2 transcripts.

Its subcellular location is the cytoplasm. In terms of biological role, RNA-binding protein that acts as a regulator of dosage compensation in both males and females. In males, acts as positive regulator of dosage compensation by promoting assembly of the MSL complex, a multiprotein complex that mediates X-chromosome dosage compensation. Promotes MSL complex assembly via association with roX1 and roX2 non-coding RNA components of the MSL complex, facilitating the interaction between non-coding RNAs and mle. In females, acts as an inhibitor of dosage compensation together with Sxl by preventing production of msl-2 protein, an essential component of the MSL complex. Specifically binds to the 3'-UTR of msl-2 transcripts, and cooperates with Sxl to prevent translation initiation of msl-2 transcripts. Mechanistically, Sxl and Unr inhibit translation initiation by preventing ribosome recruitment after pAbp-mediated recruitment of the eIF4F complex. The sequence is that of RNA-binding protein Unr from Drosophila melanogaster (Fruit fly).